Consider the following 615-residue polypeptide: Vitamin B12 transporter BtuB (615 aa).

The N-terminal stretch at 1–20 (MIKKISLLTALSVTAFSGWA) is a signal peptide. Residues 26–33 (NAMVVTAN) carry the TonB box motif. In terms of domain architecture, TBDR plug spans 38–152 (PVNSVLAPTT…IGGVVNIITT (115 aa)). Cyanocob(III)alamin is bound by residues Ser-85, Asn-92, and 110 to 111 (IS). The TBDR beta-barrel domain occupies 155–615 (KNGTTLNAGV…EYYLTGSYTF (461 aa)). Transmembrane regions (beta stranded) follow at residues 158-165 (TTLNAGVG), 169-178 (YQSYDAATQQ), and 184-195 (TTATLAGNYVYT). Residues Asp-199, Gln-210, Asp-212, and Asp-214 each coordinate Ca(2+). Transmembrane regions (beta stranded) follow at residues 216-226 (FMSKSLYGTVE) and 231-247 (DQFS…NRTD). 3 residues coordinate Ca(2+): Tyr-248, Asp-249, and Asp-255. 14 consecutive transmembrane segments (beta stranded) span residues 257 to 271 (RQLY…LRYQ), 273 to 290 (GIYS…KDYD), 303 to 319 (TLVD…NVLQ), 322 to 331 (AGTVSAGVDW), 347 to 363 (ESQN…QRFA), 365 to 375 (IVLEGSVRGDD), 379 to 394 (FGWH…WEFI), 397 to 411 (YSLI…KAPN), 429 to 438 (ESKQWESGVE), 444 to 453 (VIWRVSGYRN), 468 to 486 (VYEN…TASF), 490 to 505 (PVGH…SRNA), 513 to 525 (RRAK…QLDW), and 531 to 546 (DWSV…YDKD). Thr-303 is a binding site for cyanocob(III)alamin. Arg-513 is a binding site for cyanocob(III)alamin. Tyr-547 contributes to the cyanocob(III)alamin binding site. 3 beta stranded membrane-spanning segments follow: residues 559–573 (TVKL…LAAS), 586–597 (IANLFDKDYETA), and 603–615 (AGRE…SYTF). Positions 598–615 (YGYRTAGREYYLTGSYTF) match the TonB C-terminal box motif.

It belongs to the TonB-dependent receptor family. BtuB (TC 1.B.14.3.1) subfamily.

It is found in the cell outer membrane. Its function is as follows. Involved in the active translocation of vitamin B12 (cyanocobalamin) across the outer membrane to the periplasmic space. It derives its energy for transport by interacting with the trans-periplasmic membrane protein TonB. The polypeptide is Vitamin B12 transporter BtuB (Pectobacterium atrosepticum (strain SCRI 1043 / ATCC BAA-672) (Erwinia carotovora subsp. atroseptica)).